The sequence spans 566 residues: Sister chromatid cohesion protein 1 (566 aa).

Serine 161 carries the post-translational modification Phosphoserine. Serine 175 carries the post-translational modification Phosphoserine; by CDC5. Position 210 is an N6-acetyllysine; by ECO1 (lysine 210). The residue at position 263 (serine 263) is a Phosphoserine; by CDC5. Phosphoserine is present on serine 307. The tract at residues 325–356 is disordered; it reads SIQIDEETENSESIASSNTYKEERSNNLLTPQ. Position 354 is a phosphothreonine (threonine 354).

This sequence belongs to the rad21 family. In terms of assembly, interacts directly with IRR1/SCC3 in cohesin complex. Cohesin complexes are composed of the SMC1 and SMC3 heterodimer attached via their hinge domain, MCD1/SCC1 which link them, and IRR1, which interacts with MCD1. The cohesin complex also interacts with SCC2, which is required for its association with chromosomes. Cleaved by ESP1 at the onset of anaphase. Post-translationally, phosphorylated by CDC5/Polo-like kinase at the onset of anaphase. Phosphorylation takes places at proximity to cleavage sites and is required for an efficient cleavage by ESP1. In terms of processing, acetylated by ECO1.

The protein localises to the nucleus. Its subcellular location is the chromosome. It localises to the centromere. Functionally, cleavable component of the cohesin complex involved in chromosome cohesion during cell cycle. The cohesin complex is required for the cohesion of sister chromatids after DNA replication. The cohesin complex apparently forms a large proteinaceous ring within which sister chromatids can be trapped. At metaphase-anaphase transition, this protein is cleaved by ESP1 and dissociates from chromatin, allowing sister chromatids to segregate. The sequence is that of Sister chromatid cohesion protein 1 (MCD1) from Saccharomyces cerevisiae (strain ATCC 204508 / S288c) (Baker's yeast).